The sequence spans 141 residues: Small ribosomal subunit protein bS6 (141 aa).

A disordered region spans residues 97–141 (TGQSEMLKAEENRSERRERRDRPEHSDSADGDDGDNSDVSDNADE). Basic and acidic residues predominate over residues 103-124 (LKAEENRSERRERRDRPEHSDS). The segment covering 125–141 (ADGDDGDNSDVSDNADE) has biased composition (acidic residues).

It belongs to the bacterial ribosomal protein bS6 family.

Its function is as follows. Binds together with bS18 to 16S ribosomal RNA. In Pseudomonas syringae pv. syringae (strain B728a), this protein is Small ribosomal subunit protein bS6.